A 472-amino-acid chain; its full sequence is Platelet glycoprotein 4 (472 aa).

Residues 1–7 (MGCDRNC) lie on the Cytoplasmic side of the membrane. S-palmitoyl cysteine attachment occurs at residues C3 and C7. A helical membrane pass occupies residues 8-29 (GLIAGAVIGAVLAVFGGILMPV). At 30-439 (GDMLVEKTIK…FRNQVTGKVK (410 aa)) the chain is on the extracellular side. N79, N102, N132, N205, N235, N247, N321, and N417 each carry an N-linked (GlcNAc...) asparagine glycan. The required for interaction with thrombospondins, THBS1 and THBS2 stretch occupies residues 93–120 (YRVRYLAKENITQDPVDSTVSFVQPNGA). 3 cysteine pairs are disulfide-bonded: C243–C311, C272–C333, and C313–C322. Residues 440–461 (LLGLVEMVLLGLGVVMFVAFMI) traverse the membrane as a helical segment. The tract at residues 460-472 (MISYCACRSKNRK) is interaction with PTK2, PXN and LYN. At 462 to 472 (SYCACRSKNRK) the chain is on the cytoplasmic side. 2 S-palmitoyl cysteine lipidation sites follow: C464 and C466. Residues K469 and K472 each participate in a glycyl lysine isopeptide (Lys-Gly) (interchain with G-Cter in ubiquitin) cross-link.

This sequence belongs to the CD36 family. In terms of assembly, interacts with THBS1 and THBS2; the interactions mediate the THBS antiangiogenic activity. Upon interaction with a ligand, such as oxidized low-density lipoprotein (oxLDL) or amyloid-beta 42, rapidly forms a complex with TLR4 and TLR6; the complex is internalized and triggers an inflammatory signal. Through its C-terminus, interacts with PTK2, PXN and LYN, but not with SRC. LYN kinase activity is required for facilitating TLR4:TLR6 heterodimerization and signal initiation. Upon interaction with ligands such as diacylated lipopeptides, interacts with the TLR2:TLR6 heterodimer. Interacts with CD9, CD81, FCER1G, ITGB2 and/or ITGB2; forming a membrane heteromeric complex required for the internalization of CD36 and its ligands. Interacts (when palmitoylated) with ARF6; this interaction mediates CD36 transport to the plasma membrane. In terms of processing, palmitoylated by ZDHHC5. Palmitoylation is required for proper localization at the plasma membrane. Post-translationally, ubiquitinated at Lys-469 and Lys-472. Ubiquitination is induced by fatty acids such as oleic acid and leads to degradation by the proteasome. Ubiquitination and degradation are inhibited by insulin which blocks the effect of fatty acids.

The protein resides in the cell membrane. The protein localises to the membrane raft. It is found in the golgi apparatus. Its subcellular location is the apical cell membrane. The enzyme catalyses butanoate(out) = butanoate(in). The catalysed reaction is (9Z)-octadecenoate(out) = (9Z)-octadecenoate(in). It catalyses the reaction (9Z,12Z)-octadecadienoate(out) = (9Z,12Z)-octadecadienoate(in). It carries out the reaction tetradecanoate(out) = tetradecanoate(in). The enzyme catalyses hexadecanoate(out) = hexadecanoate(in). The catalysed reaction is tetracosanoate(out) = tetracosanoate(in). Functionally, multifunctional glycoprotein that acts as a receptor for a broad range of ligands. Ligands can be of proteinaceous nature like thrombospondin, fibronectin, collagen or amyloid-beta as well as of lipidic nature such as oxidized low-density lipoprotein (oxLDL), anionic phospholipids, long-chain fatty acids and bacterial diacylated lipopeptides. They are generally multivalent and can therefore engage multiple receptors simultaneously, the resulting formation of CD36 clusters initiates signal transduction and internalization of receptor-ligand complexes. The dependency on coreceptor signaling is strongly ligand specific. Cellular responses to these ligands are involved in angiogenesis, inflammatory response, fatty acid metabolism, taste and dietary fat processing in the intestine. Binds long-chain fatty acids and facilitates their transport into cells, thus participating in muscle lipid utilization, adipose energy storage, and gut fat absorption. Mechanistically, binding of fatty acids activates downstream kinase LYN, which phosphorylates the palmitoyltransferase ZDHHC5 and inactivates it, resulting in the subsequent depalmitoylation of CD36 and caveolar endocytosis. In the small intestine, plays a role in proximal absorption of dietary fatty acid and cholesterol for optimal chylomicron formation, possibly through the activation of MAPK1/3 (ERK1/2) signaling pathway. Involved in oral fat perception and preferences. Detection into the tongue of long-chain fatty acids leads to a rapid and sustained rise in flux and protein content of pancreatobiliary secretions. In taste receptor cells, mediates the induction of an increase in intracellular calcium levels by long-chain fatty acids, leading to the activation of the gustatory neurons in the nucleus of the solitary tract. Important factor in both ventromedial hypothalamus neuronal sensing of long-chain fatty acid and the regulation of energy and glucose homeostasis. Receptor for thrombospondins, THBS1 and THBS2, mediating their antiangiogenic effects. As a coreceptor for TLR4:TLR6 heterodimer, promotes inflammation in monocytes/macrophages. Upon ligand binding, such as oxLDL or amyloid-beta 42, interacts with the heterodimer TLR4:TLR6, the complex is internalized and triggers inflammatory response, leading to NF-kappa-B-dependent production of CXCL1, CXCL2 and CCL9 cytokines, via MYD88 signaling pathway, and CCL5 cytokine, via TICAM1 signaling pathway, as well as IL1B secretion, through the priming and activation of the NLRP3 inflammasome. Selective and nonredundant sensor of microbial diacylated lipopeptide that signal via TLR2:TLR6 heterodimer, this cluster triggers signaling from the cell surface, leading to the NF-kappa-B-dependent production of TNF, via MYD88 signaling pathway and subsequently is targeted to the Golgi in a lipid-raft dependent pathway. The sequence is that of Platelet glycoprotein 4 (CD36) from Mesocricetus auratus (Golden hamster).